The primary structure comprises 298 residues: Tyrosine recombinase XerC (298 aa).

One can recognise a Core-binding (CB) domain in the interval 1–84 (MNHIQDAFLN…TLRTFYEYWM (84 aa)). The region spanning 105-286 (YLPQFFYEEE…SNQQLRKVYL (182 aa)) is the Tyr recombinase domain. Residues arginine 145, lysine 169, histidine 238, arginine 241, and histidine 264 contribute to the active site. Tyrosine 273 serves as the catalytic O-(3'-phospho-DNA)-tyrosine intermediate.

Belongs to the 'phage' integrase family. XerC subfamily. As to quaternary structure, forms a cyclic heterotetrameric complex composed of two molecules of XerC and two molecules of XerD.

It localises to the cytoplasm. Site-specific tyrosine recombinase, which acts by catalyzing the cutting and rejoining of the recombining DNA molecules. The XerC-XerD complex is essential to convert dimers of the bacterial chromosome into monomers to permit their segregation at cell division. It also contributes to the segregational stability of plasmids. The polypeptide is Tyrosine recombinase XerC (Staphylococcus aureus (strain USA300)).